We begin with the raw amino-acid sequence, 369 residues long: S-(hydroxymethyl)glutathione dehydrogenase (369 aa).

Positions 40, 62, 92, 95, 98, 106, and 169 each coordinate Zn(2+).

The protein belongs to the zinc-containing alcohol dehydrogenase family. Class-III subfamily. In terms of assembly, homodimer. Requires Zn(2+) as cofactor.

The protein resides in the cytoplasm. The enzyme catalyses S-(hydroxymethyl)glutathione + NADP(+) = S-formylglutathione + NADPH + H(+). It carries out the reaction S-(hydroxymethyl)glutathione + NAD(+) = S-formylglutathione + NADH + H(+). The catalysed reaction is a primary alcohol + NAD(+) = an aldehyde + NADH + H(+). It catalyses the reaction a secondary alcohol + NAD(+) = a ketone + NADH + H(+). The enzyme catalyses S-nitrosoglutathione + NADH + H(+) = S-(hydroxysulfenamide)glutathione + NAD(+). Has high formaldehyde dehydrogenase activity in the presence of glutathione and catalyzes the oxidation of normal alcohols in a reaction that is not GSH-dependent. In addition, hemithiolacetals other than those formed from GSH, including omega-thiol fatty acids, also are substrates. Also acts as a S-nitroso-glutathione reductase by catalyzing the NADH-dependent reduction of S-nitrosoglutathione. This chain is S-(hydroxymethyl)glutathione dehydrogenase (frmA), found in Synechocystis sp. (strain ATCC 27184 / PCC 6803 / Kazusa).